A 323-amino-acid polypeptide reads, in one-letter code: Acetyl-coenzyme A carboxylase carboxyl transferase subunit alpha (323 aa).

Residues 39–293 (RLAGKSQQLT…KRSLAESLRQ (255 aa)) enclose the CoA carboxyltransferase C-terminal domain.

Belongs to the AccA family. As to quaternary structure, acetyl-CoA carboxylase is a heterohexamer composed of biotin carboxyl carrier protein (AccB), biotin carboxylase (AccC) and two subunits each of ACCase subunit alpha (AccA) and ACCase subunit beta (AccD).

The protein localises to the cytoplasm. It catalyses the reaction N(6)-carboxybiotinyl-L-lysyl-[protein] + acetyl-CoA = N(6)-biotinyl-L-lysyl-[protein] + malonyl-CoA. It functions in the pathway lipid metabolism; malonyl-CoA biosynthesis; malonyl-CoA from acetyl-CoA: step 1/1. Component of the acetyl coenzyme A carboxylase (ACC) complex. First, biotin carboxylase catalyzes the carboxylation of biotin on its carrier protein (BCCP) and then the CO(2) group is transferred by the carboxyltransferase to acetyl-CoA to form malonyl-CoA. The sequence is that of Acetyl-coenzyme A carboxylase carboxyl transferase subunit alpha from Cupriavidus necator (strain ATCC 17699 / DSM 428 / KCTC 22496 / NCIMB 10442 / H16 / Stanier 337) (Ralstonia eutropha).